The sequence spans 1378 residues: DNA-directed RNA polymerase subunit beta (1378 aa).

The protein belongs to the RNA polymerase beta chain family. In terms of assembly, the RNAP catalytic core consists of 2 alpha, 1 beta, 1 beta' and 1 omega subunit. When a sigma factor is associated with the core the holoenzyme is formed, which can initiate transcription.

It catalyses the reaction RNA(n) + a ribonucleoside 5'-triphosphate = RNA(n+1) + diphosphate. Functionally, DNA-dependent RNA polymerase catalyzes the transcription of DNA into RNA using the four ribonucleoside triphosphates as substrates. This Hyphomonas neptunium (strain ATCC 15444) protein is DNA-directed RNA polymerase subunit beta.